The sequence spans 159 residues: Putative ribosomal RNA large subunit methyltransferase H (159 aa).

Residues Leu76, Gly108, and 127 to 132 (FSKMTF) contribute to the S-adenosyl-L-methionine site.

The protein belongs to the RNA methyltransferase RlmH family.

It localises to the cytoplasm. It catalyses the reaction pseudouridine(1915) in 23S rRNA + S-adenosyl-L-methionine = N(3)-methylpseudouridine(1915) in 23S rRNA + S-adenosyl-L-homocysteine + H(+). In terms of biological role, specifically methylates the pseudouridine at position 1915 (m3Psi1915) in 23S rRNA. The polypeptide is Putative ribosomal RNA large subunit methyltransferase H (Methanococcus vannielii (strain ATCC 35089 / DSM 1224 / JCM 13029 / OCM 148 / SB)).